Consider the following 235-residue polypeptide: Protein LIFEGUARD 1 (235 aa).

Helical transmembrane passes span 33–53 (YSILSLQLLVTVGVSAVVYFV), 67–87 (LAVFFVILLLPLLLLWPLLAF), 95–115 (CIVLSIFTLSISFSVGICCSL), 120–140 (IVLEAAILTAVMVFGLTIYTF), 149–169 (FSFLGPFLFGALLIILVFTLL), 178–198 (LSSMIFSGIASIVFCGYIIFD), and 212–232 (ITAAIRLYLDVMNLFLSLLGI).

Belongs to the BI1 family. As to expression, expressed at very low in leaves.

It is found in the membrane. (Microbial infection) Facilitates the development of the powdery mildew fungus E.cruciferarum. Its function is as follows. (Microbial infection) May prevent cell death upon A.alternata f.sp. lycopersici (AAL) toxin treatment. This is Protein LIFEGUARD 1 from Arabidopsis thaliana (Mouse-ear cress).